The chain runs to 258 residues: Axonemal dynein light intermediate polypeptide 1 (258 aa).

Disordered regions lie at residues methionine 1–aspartate 60 and aspartate 202–lysine 231. Residues methionine 176–alanine 255 adopt a coiled-coil conformation.

This sequence belongs to the inner dynein arm light chain family. As to quaternary structure, interacts with CFAP45. Interacts with DYNC1H1.

It is found in the cell projection. Its subcellular location is the cilium. The protein localises to the flagellum. The protein resides in the dynein axonemal particle. It localises to the cytoplasm. Functionally, involved in sperm flagellum assembly. This chain is Axonemal dynein light intermediate polypeptide 1, found in Rattus norvegicus (Rat).